The following is a 218-amino-acid chain: N-(5'-phosphoribosyl)anthranilate isomerase (218 aa).

Belongs to the TrpF family.

The catalysed reaction is N-(5-phospho-beta-D-ribosyl)anthranilate = 1-(2-carboxyphenylamino)-1-deoxy-D-ribulose 5-phosphate. It participates in amino-acid biosynthesis; L-tryptophan biosynthesis; L-tryptophan from chorismate: step 3/5. This chain is N-(5'-phosphoribosyl)anthranilate isomerase, found in Bacillus licheniformis (strain ATCC 14580 / DSM 13 / JCM 2505 / CCUG 7422 / NBRC 12200 / NCIMB 9375 / NCTC 10341 / NRRL NRS-1264 / Gibson 46).